The primary structure comprises 236 residues: Adenosine 5'-phosphosulfate reductase (236 aa).

Positions 123, 124, 206, and 209 each coordinate [4Fe-4S] cluster. The Nucleophile; cysteine thiosulfonate intermediate role is filled by Cys-232.

It belongs to the PAPS reductase family. CysH subfamily. [4Fe-4S] cluster is required as a cofactor.

It is found in the cytoplasm. It carries out the reaction [thioredoxin]-disulfide + sulfite + AMP + 2 H(+) = adenosine 5'-phosphosulfate + [thioredoxin]-dithiol. The protein operates within sulfur metabolism; hydrogen sulfide biosynthesis; sulfite from sulfate. In terms of biological role, catalyzes the formation of sulfite from adenosine 5'-phosphosulfate (APS) using thioredoxin as an electron donor. This is Adenosine 5'-phosphosulfate reductase from Streptomyces coelicolor (strain ATCC BAA-471 / A3(2) / M145).